The sequence spans 234 residues: Opacity protein opA51 (234 aa).

A signal peptide is located at residue Ala1.

The protein belongs to the opacity porin family.

The protein localises to the cell outer membrane. Functionally, implicated in a number of adherence functions. OPA proteins are implicated in pathogenesis and are subject to phase variation. The chain is Opacity protein opA51 (opaB) from Neisseria gonorrhoeae.